The primary structure comprises 57 residues: UPF0391 membrane protein Nwi_2359 (57 aa).

Transmembrane regions (helical) follow at residues 4 to 24 and 30 to 50; these read WVVT…GGIA and IAKI…VVGF.

It belongs to the UPF0391 family.

It is found in the cell membrane. In Nitrobacter winogradskyi (strain ATCC 25391 / DSM 10237 / CIP 104748 / NCIMB 11846 / Nb-255), this protein is UPF0391 membrane protein Nwi_2359.